We begin with the raw amino-acid sequence, 50 residues long: Peptide encoded by miPEP319a (50 aa).

Regulatory peptide encoded by the primary transcript (pri-miR319a) of the microRNA miR319a that enhances the accumulation of its corresponding mature miRNA. Acts probably as a transcriptional activator of its corresponding pri-miRNA. This Arabidopsis thaliana (Mouse-ear cress) protein is Peptide encoded by miPEP319a.